A 274-amino-acid polypeptide reads, in one-letter code: 2-dehydro-3-deoxyphosphooctonate aldolase (274 aa).

This sequence belongs to the KdsA family.

It localises to the cytoplasm. It catalyses the reaction D-arabinose 5-phosphate + phosphoenolpyruvate + H2O = 3-deoxy-alpha-D-manno-2-octulosonate-8-phosphate + phosphate. The protein operates within carbohydrate biosynthesis; 3-deoxy-D-manno-octulosonate biosynthesis; 3-deoxy-D-manno-octulosonate from D-ribulose 5-phosphate: step 2/3. It participates in bacterial outer membrane biogenesis; lipopolysaccharide biosynthesis. The protein is 2-dehydro-3-deoxyphosphooctonate aldolase of Rickettsia conorii (strain ATCC VR-613 / Malish 7).